Consider the following 587-residue polypeptide: 2-succinyl-5-enolpyruvyl-6-hydroxy-3-cyclohexene-1-carboxylate synthase (587 aa).

Belongs to the TPP enzyme family. MenD subfamily. Homodimer. Requires Mg(2+) as cofactor. Mn(2+) serves as cofactor. It depends on thiamine diphosphate as a cofactor.

It carries out the reaction isochorismate + 2-oxoglutarate + H(+) = 5-enolpyruvoyl-6-hydroxy-2-succinyl-cyclohex-3-ene-1-carboxylate + CO2. It functions in the pathway quinol/quinone metabolism; 1,4-dihydroxy-2-naphthoate biosynthesis; 1,4-dihydroxy-2-naphthoate from chorismate: step 2/7. It participates in cofactor biosynthesis; phylloquinone biosynthesis. Functionally, catalyzes the thiamine diphosphate-dependent decarboxylation of 2-oxoglutarate and the subsequent addition of the resulting succinic semialdehyde-thiamine pyrophosphate anion to isochorismate to yield 2-succinyl-5-enolpyruvyl-6-hydroxy-3-cyclohexene-1-carboxylate (SEPHCHC). The polypeptide is 2-succinyl-5-enolpyruvyl-6-hydroxy-3-cyclohexene-1-carboxylate synthase (Prochlorococcus marinus (strain AS9601)).